The primary structure comprises 1067 residues: Sal-like protein 4 (1067 aa).

The segment at 1–62 (MSRRKQAKPQ…SEDSIPVKRP (62 aa)) is disordered. Residues 15–42 (EEGQGEQPQQLPSPDLAEALAAEEPGAP) are compositionally biased toward low complexity. Ser53 carries the phosphoserine modification. The C2H2-type 1; atypical zinc finger occupies 68–90 (HICNKCCAEFFSLSEFMEHKKSC). Residues 115-140 (ALSHQLGSPSNKDSLQENGSSSGDLK) form a disordered region. Residues 119–137 (QLGSPSNKDSLQENGSSSG) are compositionally biased toward polar residues. Lys151 participates in a covalent cross-link: Glycyl lysine isopeptide (Lys-Gly) (interchain with G-Cter in SUMO1); alternate. Lys151 participates in a covalent cross-link: Glycyl lysine isopeptide (Lys-Gly) (interchain with G-Cter in SUMO2); alternate. Glycyl lysine isopeptide (Lys-Gly) (interchain with G-Cter in SUMO2) cross-links involve residues Lys170, Lys185, and Lys291. The residue at position 308 (Ser308) is a Phosphoserine. A Glycyl lysine isopeptide (Lys-Gly) (interchain with G-Cter in SUMO1); alternate cross-link involves residue Lys317. Residue Lys317 forms a Glycyl lysine isopeptide (Lys-Gly) (interchain with G-Cter in SUMO2); alternate linkage. A Glycyl lysine isopeptide (Lys-Gly) (interchain with G-Cter in SUMO2) cross-link involves residue Lys377. Residue Lys379 forms a Glycyl lysine isopeptide (Lys-Gly) (interchain with G-Cter in SUMO1); alternate linkage. Residue Lys379 forms a Glycyl lysine isopeptide (Lys-Gly) (interchain with G-Cter in SUMO2); alternate linkage. 2 consecutive C2H2-type zinc fingers follow at residues 387 to 409 (HKCRYCPKVFGTDSSLQIHLRSH) and 415 to 437 (YVCPICGHRFTTKGNLKVHLQRH). Lys441 is covalently cross-linked (Glycyl lysine isopeptide (Lys-Gly) (interchain with G-Cter in SUMO2)). The tract at residues 471–521 (DESSLSVDAEPVPVTGTPSLGLPQKLTSGPNSRDLMGGSLPNDMQPGPSPE) is disordered. Lys557 is covalently cross-linked (Glycyl lysine isopeptide (Lys-Gly) (interchain with G-Cter in SUMO2)). 2 consecutive C2H2-type zinc fingers follow at residues 573 to 595 (NECLICHRVLSCQSSLKMHYRTH) and 601 to 623 (FQCKICGRAFSTKGNLKTHLGVH). Glycyl lysine isopeptide (Lys-Gly) (interchain with G-Cter in SUMO2) cross-links involve residues Lys604 and Lys630. The segment at 633–655 (HSCPICQKKFTNAVMLQQHIRMH) adopts a C2H2-type 6 zinc-finger fold. Disordered regions lie at residues 682-716 (ENGSASGVCQDDAAEGMEAEEVCSQDVPSGPSTVS) and 752-835 (RQSS…SLPP). Residues 693–704 (DAAEGMEAEEVC) are compositionally biased toward acidic residues. Composition is skewed to polar residues over residues 707–716 (DVPSGPSTVS) and 752–761 (RQSSRENSSL). 2 positions are modified to phosphoserine: Ser785 and Ser798. Over residues 798-809 (SPANSQAGSVKS) the composition is skewed to polar residues. The span at 810-829 (RSPEGHKAEGVESCRVDTEG) shows a compositional bias: basic and acidic residues. Lys846 is covalently cross-linked (Glycyl lysine isopeptide (Lys-Gly) (interchain with G-Cter in SUMO1); alternate). Lys846 participates in a covalent cross-link: Glycyl lysine isopeptide (Lys-Gly) (interchain with G-Cter in SUMO2); alternate. Residues 880–902 (HCCTRCGKNFSSASALQIHERTH) form a C2H2-type 7 zinc finger. A Glycyl lysine isopeptide (Lys-Gly) (interchain with G-Cter in SUMO2) cross-link involves residue Lys906. Residues 908-930 (FVCNICGRAFTTKGNLKVHYMTH) form a C2H2-type 8 zinc finger. Glycyl lysine isopeptide (Lys-Gly) (interchain with G-Cter in SUMO2) cross-links involve residues Lys942 and Lys957. Ser1029 bears the Phosphoserine mark.

It belongs to the sal C2H2-type zinc-finger protein family. Interacts with POU5F1/OCT4. Interacts with NANOG. Interacts with BEND3. Interacts with NSD2 (via PHD-type zinc fingers 1, 2 and 3). Interacts with NRBP1. In terms of processing, sumoylation with both SUMO1 and SUMO2 regulates the stability, subcellular localization, transcriptional activity, and may reduce interaction with POU5F1/OCT4.

It localises to the cytoplasm. It is found in the nucleus. Transcription factor with a key role in the maintenance and self-renewal of embryonic and hematopoietic stem cells. This is Sal-like protein 4 (Sall4) from Mus musculus (Mouse).